The following is a 306-amino-acid chain: Replication termination factor 2 (306 aa).

The interval 193-276 (AKLEKKTKKP…RSIADSEESE (84 aa)) is disordered. Over residues 226-240 (GKPEEASLDSREKKT) the composition is skewed to basic and acidic residues. Polar residues predominate over residues 243–255 (APKSTAMNESSSG). Ser287 carries the phosphoserine modification.

This sequence belongs to the rtf2 family. In terms of assembly, interacts with DDI2; probably also interacts with DDI1. In terms of processing, undergoes proteasomal degradation, via DDI1 and DDI2. Removal from stalled replisomes and degradation are required for genome stability.

It is found in the chromosome. Functionally, replication termination factor which is a component of the elongating replisome. Required for ATR pathway signaling upon DNA damage and has a positive activity during DNA replication. Might function to facilitate fork pausing at replication fork barriers like the rDNA. May be globally required to stimulate ATR signaling after the fork stalls or encounters a lesion. Interacts with nascent DNA. The protein is Replication termination factor 2 of Homo sapiens (Human).